We begin with the raw amino-acid sequence, 163 residues long: Bacterial ISG15-like ubiquitin-like protein BilA (163 aa).

2 consecutive Ubiquitin-like BIL-type domains span residues 4-80 and 81-163; these read LVVF…RCKR and IRAT…RIEG. A Glycyl lysine isopeptide (Gly-Lys) (interchain with K-? in central tail fiber acceptor protein) cross-link involves residue glycine 163.

In terms of biological role, component of the Bil (bacterial ISG15-like) antiviral defense system, composed of BilA, BilB, BilC and BilD. The Bil system specifically conjugates a ubiquitin-like moiety (bilA) to the bacteriophage central tail fiber (CTF, or tip attachment protein J) via reactions involving E1 (bilD) and E2 (bilB). Modifies CTF of phage SECphi27 and SECphi4, which probably interferes with assembly of the phage tail. Also modifies T5 baseplate hub protein pb3 (gene D16), but not gp27 of phage T6 (Bil defends against T6). Bil-encoding bacteria produce mostly defective phage SECphi27, many of which have phage assembly defects, including no tails. SECphi27 phage progeny produced in E.coli with the Bil system inject less DNA into naive host cells, maybe because the phage are less able to adsorb and inject their DNA into host cells. Its function is as follows. Expression of the Bil system in E.coli (strain MG1655) confers about 100-fold resistance to phage SECphi27, SECphi18, SECphi6, SECphi4 and T5, but not to SECphi17. When cells expressing the Bil system are infected by phage SECphi27 at low multiplicity of infection (0.03 MOI) the culture survives, at 3.0 MOI the culture collapses at the same time as cells without the Bil system. The chain is Bacterial ISG15-like ubiquitin-like protein BilA from Collimonas sp. (strain OK412).